The following is a 314-amino-acid chain: DNA-directed RNA polymerase subunit alpha (314 aa).

Residues 1-229 (MLESKLKAPV…EHLNYFANPE (229 aa)) are alpha N-terminal domain (alpha-NTD). Positions 246-314 (SAEEDLDLPL…LAKKGFTLKE (69 aa)) are alpha C-terminal domain (alpha-CTD).

This sequence belongs to the RNA polymerase alpha chain family. As to quaternary structure, homodimer. The RNAP catalytic core consists of 2 alpha, 1 beta, 1 beta' and 1 omega subunit. When a sigma factor is associated with the core the holoenzyme is formed, which can initiate transcription.

The catalysed reaction is RNA(n) + a ribonucleoside 5'-triphosphate = RNA(n+1) + diphosphate. DNA-dependent RNA polymerase catalyzes the transcription of DNA into RNA using the four ribonucleoside triphosphates as substrates. The polypeptide is DNA-directed RNA polymerase subunit alpha (rpoA) (Thermus aquaticus).